Reading from the N-terminus, the 241-residue chain is 1-(5-phosphoribosyl)-5-[(5-phosphoribosylamino)methylideneamino] imidazole-4-carboxamide isomerase (241 aa).

The Proton acceptor role is filled by Asp-10. The active-site Proton donor is Asp-131.

It belongs to the HisA/HisF family.

The protein resides in the cytoplasm. The enzyme catalyses 1-(5-phospho-beta-D-ribosyl)-5-[(5-phospho-beta-D-ribosylamino)methylideneamino]imidazole-4-carboxamide = 5-[(5-phospho-1-deoxy-D-ribulos-1-ylimino)methylamino]-1-(5-phospho-beta-D-ribosyl)imidazole-4-carboxamide. Its pathway is amino-acid biosynthesis; L-histidine biosynthesis; L-histidine from 5-phospho-alpha-D-ribose 1-diphosphate: step 4/9. The sequence is that of 1-(5-phosphoribosyl)-5-[(5-phosphoribosylamino)methylideneamino] imidazole-4-carboxamide isomerase from Bifidobacterium longum subsp. infantis (strain ATCC 15697 / DSM 20088 / JCM 1222 / NCTC 11817 / S12).